Consider the following 442-residue polypeptide: Probable diguanylate cyclase DgcI (442 aa).

Positions 1–23 (MSRINKFVLTVSLLIFIMISAVA) are cleaved as a signal peptide. Cys-24 is lipidated: N-palmitoyl cysteine. Cys-24 carries the S-diacylglycerol cysteine lipid modification. A helical transmembrane segment spans residues 231-251 (LIIFFAALVAVISGASCLYLV). Residues 319-442 (KGGYLCLFDV…KNGRAQISWQ (124 aa)) form the GGDEF domain. Asp-327 lines the Mg(2+) pocket. The substrate site is built by Asn-335, His-340, and Asp-344. Residue Asp-371 participates in Mg(2+) binding.

Homodimer. Requires Mg(2+) as cofactor.

The protein resides in the cell membrane. It catalyses the reaction 2 GTP = 3',3'-c-di-GMP + 2 diphosphate. It participates in purine metabolism; 3',5'-cyclic di-GMP biosynthesis. Its function is as follows. Catalyzes the synthesis of cyclic-di-GMP (c-di-GMP) via the condensation of 2 GTP molecules. This chain is Probable diguanylate cyclase DgcI, found in Escherichia coli (strain K12).